The sequence spans 117 residues: Large ribosomal subunit protein bL20 (117 aa).

The protein belongs to the bacterial ribosomal protein bL20 family.

In terms of biological role, binds directly to 23S ribosomal RNA and is necessary for the in vitro assembly process of the 50S ribosomal subunit. It is not involved in the protein synthesizing functions of that subunit. The chain is Large ribosomal subunit protein bL20 from Gloeothece citriformis (strain PCC 7424) (Cyanothece sp. (strain PCC 7424)).